Here is a 124-residue protein sequence, read N- to C-terminus: Small ribosomal subunit protein uS12 (124 aa).

Residues 1-29 (MPTINQLVRRPRRPRESANKAPALQHNPQ) form a disordered region. D90 is subject to 3-methylthioaspartic acid.

Belongs to the universal ribosomal protein uS12 family. In terms of assembly, part of the 30S ribosomal subunit. Contacts proteins S8 and S17. May interact with IF1 in the 30S initiation complex.

Functionally, with S4 and S5 plays an important role in translational accuracy. In terms of biological role, interacts with and stabilizes bases of the 16S rRNA that are involved in tRNA selection in the A site and with the mRNA backbone. Located at the interface of the 30S and 50S subunits, it traverses the body of the 30S subunit contacting proteins on the other side and probably holding the rRNA structure together. The combined cluster of proteins S8, S12 and S17 appears to hold together the shoulder and platform of the 30S subunit. The sequence is that of Small ribosomal subunit protein uS12 from Anaplasma marginale (strain Florida).